Reading from the N-terminus, the 155-residue chain is Catabolic 3-dehydroquinase (155 aa).

The Proton acceptor role is filled by Tyr-24. The substrate site is built by Asn-75, His-81, and Asp-88. Residue His-101 is the Proton donor of the active site. Residues 102-103 (VS) and Arg-112 contribute to the substrate site.

It belongs to the type-II 3-dehydroquinase family. Homododecamer. Adopts a ring-like structure, composed of an arrangement of two hexameric rings stacked on top of one another.

It catalyses the reaction 3-dehydroquinate = 3-dehydroshikimate + H2O. The protein operates within aromatic compound metabolism; 3,4-dihydroxybenzoate biosynthesis; 3,4-dihydroxybenzoate from 3-dehydroquinate: step 1/2. In terms of biological role, is involved in the catabolism of quinate. Allows the utilization of quinate as carbon source via the beta-ketoadipate pathway. This chain is Catabolic 3-dehydroquinase, found in Penicillium rubens (strain ATCC 28089 / DSM 1075 / NRRL 1951 / Wisconsin 54-1255) (Penicillium chrysogenum).